A 164-amino-acid polypeptide reads, in one-letter code: Dehydrin Rab16B (164 aa).

A disordered region spans residues 1–164; the sequence is MENYQGQHGY…KIKEKLPGQH (164 aa). Over residues 25-53 the composition is skewed to gly residues; that stretch reads GQYGGGATAPGGGHGAMGMGGHAGAGAGG. The segment covering 107-117 has biased composition (low complexity); that stretch reads GNNQQQQQMMG. A compositionally biased stretch (basic and acidic residues) spans 147 to 164; sequence GEKKGFMDKIKEKLPGQH.

The protein belongs to the plant dehydrin family.

The polypeptide is Dehydrin Rab16B (RAB16B) (Oryza sativa subsp. indica (Rice)).